Consider the following 214-residue polypeptide: LexA repressor (214 aa).

The segment at residues 26-46 (VREIGEAVGLSSSSTVHSYLK) is a DNA-binding region (H-T-H motif). Catalysis depends on for autocatalytic cleavage activity residues S138 and K175.

It belongs to the peptidase S24 family. In terms of assembly, homodimer.

It catalyses the reaction Hydrolysis of Ala-|-Gly bond in repressor LexA.. Represses a number of genes involved in the response to DNA damage (SOS response), including recA and lexA. In the presence of single-stranded DNA, RecA interacts with LexA causing an autocatalytic cleavage which disrupts the DNA-binding part of LexA, leading to derepression of the SOS regulon and eventually DNA repair. This chain is LexA repressor, found in Desulforamulus reducens (strain ATCC BAA-1160 / DSM 100696 / MI-1) (Desulfotomaculum reducens).